The primary structure comprises 139 residues: Large ribosomal subunit protein bL9m (139 aa).

The tract at residues 83-121 (DHQQLSKRHETEVQKNMELRKESVFGHKKEEKPKEEKKG) is disordered.

The protein belongs to the bacterial ribosomal protein bL9 family. In terms of assembly, component of the mitochondrial large ribosomal subunit (mt-LSU). Mature yeast 74S mitochondrial ribosomes consist of a small (37S) and a large (54S) subunit. The 37S small subunit contains a 15S ribosomal RNA (15S mt-rRNA) and 34 different proteins. The 54S large subunit contains a 21S rRNA (21S mt-rRNA) and 46 different proteins.

It is found in the mitochondrion. In terms of biological role, component of the mitochondrial ribosome (mitoribosome), a dedicated translation machinery responsible for the synthesis of mitochondrial genome-encoded proteins, including at least some of the essential transmembrane subunits of the mitochondrial respiratory chain. The mitoribosomes are attached to the mitochondrial inner membrane and translation products are cotranslationally integrated into the membrane. The polypeptide is Large ribosomal subunit protein bL9m (MRPL50) (Saccharomyces cerevisiae (strain ATCC 204508 / S288c) (Baker's yeast)).